Reading from the N-terminus, the 506-residue chain is WD repeat-containing protein 55 homolog (506 aa).

The segment covering 1 to 11 has biased composition (basic and acidic residues); that stretch reads MHRHDCFKTPA. Disordered regions lie at residues 1–20, 33–87, and 100–132; these read MHRH…DDID, QEVL…SDDS, and AKRR…DEDD. Residues 33-48 are compositionally biased toward acidic residues; sequence QEVLNESESDDDEYDL. The segment covering 61–74 has biased composition (low complexity); that stretch reads GNISSNESISSDGS. Over residues 78–87 the composition is skewed to acidic residues; it reads NAEDTDSDDS. WD repeat units follow at residues 156–195, 200–239, 243–281, 284–323, 326–365, and 410–449; these read RLED…NKLL, VHAK…LKKL, AHDD…AIFE, EVED…LYVQ, PYEE…YHCD, and QHNM…DFGD. Residues 480 to 506 form a disordered region; the sequence is DMTKEQDDDDNDDGGNNTTAAGSNNVT. Residues 493–506 show a composition bias toward low complexity; the sequence is GGNNTTAAGSNNVT.

It belongs to the WD repeat WDR55 family.

This Drosophila mojavensis (Fruit fly) protein is WD repeat-containing protein 55 homolog.